The following is a 612-amino-acid chain: Protein tipD (612 aa).

Residues 95 to 128 (RNEKKTQQQPPSGSSKMDSSSSSSSSNRVSGMGS) are disordered. A compositionally biased stretch (low complexity) spans 106-128 (SGSSKMDSSSSSSSSNRVSGMGS). 7 WD repeats span residues 322 to 361 (GHNS…QKST), 364 to 403 (GASQ…SRHT), 406 to 444 (GHIG…CTRT), 447 to 486 (CFSS…PTQV), 490 to 530 (IHEG…TIRT), 535 to 576 (EYRN…TVKV), and 582 to 611 (NNGS…IIQW).

It belongs to the WD repeat tipD family.

Its function is as follows. Not known; disruption of the gene for tipD results in morphological defects. The polypeptide is Protein tipD (tipD) (Dictyostelium discoideum (Social amoeba)).